The chain runs to 202 residues: Snake venom metalloproteinase TM-1 (202 aa).

At Q1 the chain carries Pyrrolidone carboxylic acid. One can recognise a Peptidase M12B domain in the interval 7–202 (RYVMLAIVAD…TNPQCILNAP (196 aa)). Disulfide bonds link C118-C197, C159-C181, and C161-C164. H143 is a Zn(2+) binding site. The active site involves E144. Residues H147 and H153 each contribute to the Zn(2+) site.

This sequence belongs to the venom metalloproteinase (M12B) family. P-I subfamily. As to quaternary structure, monomer. Zn(2+) serves as cofactor. The N-terminus is blocked. Post-translationally, not glycosylated. As to expression, expressed by the venom gland.

It localises to the secreted. With respect to regulation, inhibited by EDTA and 1,10-phenanthroline. Is also inhibited by endogenous tripeptide inhibitors pyroGlu-Asn-Trp, pyroGlu-Gln-Trp, and pyroGlu-Lys-Trp. Functionally, potent fibrinogenolytic protease which cleaves mainly the Aalpha (FGA) and Bbeta (FGB) chains of fibrinogen and slightly the gamma chain (FGG). Shows preference for substrates having a moderate-size and hydrophobic residue at the P1' position. Preferentially cleaves Ala-|-Leu and Tyr-|-Leu bonds. Is more susceptible to tripeptide inhibitors than TM-3 (AC O57413). The protein is Snake venom metalloproteinase TM-1 of Protobothrops mucrosquamatus (Taiwan habu).